The following is a 287-amino-acid chain: ATP synthase gamma chain (287 aa).

The protein belongs to the ATPase gamma chain family. In terms of assembly, F-type ATPases have 2 components, CF(1) - the catalytic core - and CF(0) - the membrane proton channel. CF(1) has five subunits: alpha(3), beta(3), gamma(1), delta(1), epsilon(1). CF(0) has three main subunits: a, b and c.

The protein resides in the cell inner membrane. Produces ATP from ADP in the presence of a proton gradient across the membrane. The gamma chain is believed to be important in regulating ATPase activity and the flow of protons through the CF(0) complex. The polypeptide is ATP synthase gamma chain (Yersinia enterocolitica serotype O:8 / biotype 1B (strain NCTC 13174 / 8081)).